Here is a 319-residue protein sequence, read N- to C-terminus: MATH domain and coiled-coil domain-containing protein At3g58200 (319 aa).

Residues 6-132 form the MATH domain; it reads DNKFRWVIKN…NEEVKIVVEV (127 aa). Positions 255–302 form a coiled coil; the sequence is FKVDWLEKKLEEVKEKKKEEQIGETRMQEMKVFKQKCSDIEALMEREK.

The chain is MATH domain and coiled-coil domain-containing protein At3g58200 from Arabidopsis thaliana (Mouse-ear cress).